Reading from the N-terminus, the 408-residue chain is Imidazolonepropionase (408 aa).

Histidine 73 and histidine 75 together coordinate Fe(3+). Positions 73 and 75 each coordinate Zn(2+). Residues arginine 82, tyrosine 145, and histidine 178 each coordinate 4-imidazolone-5-propanoate. Tyrosine 145 lines the N-formimidoyl-L-glutamate pocket. Histidine 243 contributes to the Fe(3+) binding site. A Zn(2+)-binding site is contributed by histidine 243. 4-imidazolone-5-propanoate is bound at residue glutamine 246. Aspartate 318 contacts Fe(3+). Aspartate 318 contacts Zn(2+). N-formimidoyl-L-glutamate contacts are provided by asparagine 320 and glycine 322. Serine 323 serves as a coordination point for 4-imidazolone-5-propanoate.

Belongs to the metallo-dependent hydrolases superfamily. HutI family. Zn(2+) is required as a cofactor. Fe(3+) serves as cofactor.

The protein localises to the cytoplasm. It catalyses the reaction 4-imidazolone-5-propanoate + H2O = N-formimidoyl-L-glutamate. It functions in the pathway amino-acid degradation; L-histidine degradation into L-glutamate; N-formimidoyl-L-glutamate from L-histidine: step 3/3. Catalyzes the hydrolytic cleavage of the carbon-nitrogen bond in imidazolone-5-propanoate to yield N-formimidoyl-L-glutamate. It is the third step in the universal histidine degradation pathway. This is Imidazolonepropionase from Shewanella baltica (strain OS155 / ATCC BAA-1091).